The following is a 265-amino-acid chain: Phosphonoacetaldehyde hydrolase (265 aa).

Residue Asp9 is the Nucleophile of the active site. 2 residues coordinate Mg(2+): Asp9 and Ala11. Lys50 (schiff-base intermediate with substrate) is an active-site residue. Asp184 contacts Mg(2+).

The protein belongs to the HAD-like hydrolase superfamily. PhnX family. Homodimer. Requires Mg(2+) as cofactor.

The enzyme catalyses phosphonoacetaldehyde + H2O = acetaldehyde + phosphate + H(+). Its function is as follows. Involved in phosphonate degradation. The protein is Phosphonoacetaldehyde hydrolase of Lactiplantibacillus plantarum (strain ATCC BAA-793 / NCIMB 8826 / WCFS1) (Lactobacillus plantarum).